The primary structure comprises 304 residues: Protein YIF1B (304 aa).

Residues 1–146 are Cytoplasmic-facing; the sequence is MMEYPNQSGF…APRFDINAPD (146 aa). Residues 21–54 are disordered; sequence MRGSAMEPSDPTQLFDDTSSGVNKHEPGRVGKSP. Positions 30-42 are enriched in polar residues; that stretch reads DPTQLFDDTSSGV. A helical transmembrane segment spans residues 147-167; the sequence is LYIPVMGFITYVLVAGLALGT. Residues 168–182 lie on the Extracellular side of the membrane; that stretch reads QNRFSPEILGIQASS. The helical transmembrane segment at 183-203 threads the bilayer; it reads ALVWLIIEVLAVLLSLYLVTV. At 204 to 212 the chain is on the cytoplasmic side; the sequence is NTDLTTIDL. A helical transmembrane segment spans residues 213–233; the sequence is VAFSGYKYVGMIVGVVAGLLF. Residues 234-236 lie on the Extracellular side of the membrane; that stretch reads GRT. The helical transmembrane segment at 237–257 threads the bilayer; sequence GYYLALLWFCASIFVFTIRTL. The Cytoplasmic portion of the chain corresponds to 258 to 282; sequence RLKILSEAAAEGRLVRGTKNQLRMY. A helical transmembrane segment spans residues 283 to 303; that stretch reads LTMAIAAAQPVFMYWLTFHLV. Position 304 (Arg-304) is a topological domain, extracellular.

It belongs to the YIF1 family.

It localises to the endoplasmic reticulum membrane. It is found in the golgi apparatus membrane. The protein localises to the endoplasmic reticulum-Golgi intermediate compartment membrane. Functionally, functions in endoplasmic reticulum to Golgi vesicle-mediated transport and regulates the proper organization of the endoplasmic reticulum and the Golgi. Plays a key role in targeting to neuronal dendrites receptors such as HTR1A. Plays also a role in primary cilium and sperm flagellum assembly probably through protein transport to these compartments. In Danio rerio (Zebrafish), this protein is Protein YIF1B (yif1b).